Reading from the N-terminus, the 182-residue chain is Transcriptional repressor NrdR (182 aa).

The segment at 1-24 (MRCPYCGGLDTQVRDSRPTEDNTA) is disordered. The segment at 3-34 (CPYCGGLDTQVRDSRPTEDNTAIRRRRICPDC) is a zinc-finger region. Over residues 12–24 (QVRDSRPTEDNTA) the composition is skewed to basic and acidic residues. The region spanning 49–139 (LMVLKRSGRR…VYRNFREAKD (91 aa)) is the ATP-cone domain. The disordered stretch occupies residues 146-182 (ELSQPELAQSDDVKAEGGAEGGRDKPKAAGKPPRSAE). Over residues 156–172 (DDVKAEGGAEGGRDKPK) the composition is skewed to basic and acidic residues.

It belongs to the NrdR family. It depends on Zn(2+) as a cofactor.

Negatively regulates transcription of bacterial ribonucleotide reductase nrd genes and operons by binding to NrdR-boxes. The polypeptide is Transcriptional repressor NrdR (Xanthobacter autotrophicus (strain ATCC BAA-1158 / Py2)).